Reading from the N-terminus, the 87-residue chain is Small ribosomal subunit protein uS17 (87 aa).

The protein belongs to the universal ribosomal protein uS17 family. Part of the 30S ribosomal subunit.

Its function is as follows. One of the primary rRNA binding proteins, it binds specifically to the 5'-end of 16S ribosomal RNA. The polypeptide is Small ribosomal subunit protein uS17 (Staphylococcus aureus (strain JH1)).